The chain runs to 262 residues: tRNA (guanine-N(1)-)-methyltransferase (262 aa).

Residues Gly-113 and 137–142 contribute to the S-adenosyl-L-methionine site; that span reads IGDYVL.

The protein belongs to the RNA methyltransferase TrmD family. As to quaternary structure, homodimer.

It localises to the cytoplasm. The enzyme catalyses guanosine(37) in tRNA + S-adenosyl-L-methionine = N(1)-methylguanosine(37) in tRNA + S-adenosyl-L-homocysteine + H(+). Its function is as follows. Specifically methylates guanosine-37 in various tRNAs. This is tRNA (guanine-N(1)-)-methyltransferase from Saccharopolyspora erythraea (strain ATCC 11635 / DSM 40517 / JCM 4748 / NBRC 13426 / NCIMB 8594 / NRRL 2338).